Consider the following 473-residue polypeptide: Siroheme synthase (473 aa).

The interval 1-203 (MTLFPIFADL…QQPGLAEQEL (203 aa)) is precorrin-2 dehydrogenase /sirohydrochlorin ferrochelatase. NAD(+) is bound by residues 22–23 (AV) and 43–44 (PR). At serine 128 the chain carries Phosphoserine. A uroporphyrinogen-III C-methyltransferase region spans residues 216–473 (GSVVLVGAGP…GLPGPQALAA (258 aa)). Proline 225 is an S-adenosyl-L-methionine binding site. Aspartate 248 functions as the Proton acceptor in the catalytic mechanism. Lysine 270 functions as the Proton donor in the catalytic mechanism. S-adenosyl-L-methionine-binding positions include 302 to 304 (GGD), isoleucine 307, 332 to 333 (TA), methionine 384, and glycine 413.

The protein in the N-terminal section; belongs to the precorrin-2 dehydrogenase / sirohydrochlorin ferrochelatase family. It in the C-terminal section; belongs to the precorrin methyltransferase family.

The enzyme catalyses uroporphyrinogen III + 2 S-adenosyl-L-methionine = precorrin-2 + 2 S-adenosyl-L-homocysteine + H(+). It carries out the reaction precorrin-2 + NAD(+) = sirohydrochlorin + NADH + 2 H(+). It catalyses the reaction siroheme + 2 H(+) = sirohydrochlorin + Fe(2+). The protein operates within cofactor biosynthesis; adenosylcobalamin biosynthesis; precorrin-2 from uroporphyrinogen III: step 1/1. It functions in the pathway cofactor biosynthesis; adenosylcobalamin biosynthesis; sirohydrochlorin from precorrin-2: step 1/1. Its pathway is porphyrin-containing compound metabolism; siroheme biosynthesis; precorrin-2 from uroporphyrinogen III: step 1/1. It participates in porphyrin-containing compound metabolism; siroheme biosynthesis; siroheme from sirohydrochlorin: step 1/1. The protein operates within porphyrin-containing compound metabolism; siroheme biosynthesis; sirohydrochlorin from precorrin-2: step 1/1. Functionally, multifunctional enzyme that catalyzes the SAM-dependent methylations of uroporphyrinogen III at position C-2 and C-7 to form precorrin-2 via precorrin-1. Then it catalyzes the NAD-dependent ring dehydrogenation of precorrin-2 to yield sirohydrochlorin. Finally, it catalyzes the ferrochelation of sirohydrochlorin to yield siroheme. The sequence is that of Siroheme synthase from Bordetella parapertussis (strain 12822 / ATCC BAA-587 / NCTC 13253).